A 160-amino-acid chain; its full sequence is Small ribosomal subunit protein uS9 (160 aa).

Over residues 1-18 (MTDTSNSLQDLGTLTGAP) the composition is skewed to polar residues. A disordered region spans residues 1 to 37 (MTDTSNSLQDLGTLTGAPSAQPVKSVEPKIDAQGRAY).

Belongs to the universal ribosomal protein uS9 family.

The chain is Small ribosomal subunit protein uS9 from Hyphomonas neptunium (strain ATCC 15444).